A 513-amino-acid chain; its full sequence is Histone acetyltransferase KAT5 (513 aa).

In terms of domain architecture, Tudor-knot spans 8–65 (IEGCRLPVLRRNQDNEDEWPLAEILSVKDISGRKLFYVHYIDFNKRLDEWVTHERLDL). Position 52 is an N6-acetyllysine (K52). The interval 69–106 (QFPKKEAKTPTKNGLPGSRPGSPEREVPASAQASGKTL) is disordered. A Phosphoserine; by GSK3 modification is found at S86. At S90 the chain carries Phosphoserine; by CDK1 and CDK9. 2 positions are modified to N6-acetyllysine; by autocatalysis: K104 and K120. Residues 122 to 220 (REAIPGGEPD…RMTGSLVSDR (99 aa)) are disordered. The segment covering 133-144 (PLSSSSCLQPNH) has biased composition (polar residues). N6-acetyllysine; by autocatalysis is present on residues K148, K150, K187, and K189. S199 carries the phosphoserine modification. The MYST-type HAT domain maps to 227 to 504 (TRMKNIECIE…IDSKCLHFTP (278 aa)). A C2HC MYST-type zinc finger spans residues 260–285 (LYLCEFCLKYGRSLKCLQRHLTKCDL). N6-acetyllysine; by autocatalysis is present on K327. Residues 368 to 513 (ACILTLPPYQ…PKDWSKRGKW (146 aa)) form an interaction with ATF2 region. Acetyl-CoA is bound by residues 370–372 (ILT) and 377–383 (QRRGYGK). E403 acts as the Proton donor/acceptor in catalysis. Acetyl-CoA is bound by residues S407 and S416. K430 participates in a covalent cross-link: Glycyl lysine isopeptide (Lys-Gly) (interchain with G-Cter in SUMO1); alternate. K430 is covalently cross-linked (Glycyl lysine isopeptide (Lys-Gly) (interchain with G-Cter in SUMO2); alternate). K451 is covalently cross-linked (Glycyl lysine isopeptide (Lys-Gly) (interchain with G-Cter in SUMO1)).

The protein belongs to the MYST (SAS/MOZ) family. As to quaternary structure, component of the NuA4 histone acetyltransferase complex which contains the catalytic subunit KAT5/TIP60 and the subunits EP400, TRRAP/PAF400, BRD8/SMAP, EPC1, DMAP1/DNMAP1, RUVBL1/TIP49, RUVBL2, ING3, actin, ACTL6A/BAF53A, MORF4L1/MRG15, MORF4L2/MRGX, MRGBP, YEATS4/GAS41, VPS72/YL1 and MEAF6. KAT5/TIP60, EPC1, and ING3 together constitute a minimal HAT complex termed Piccolo NuA4. The NuA4 complex interacts with MYC. Interacts with ATM. Interacts with JADE1. Interacts with PLA2G4A/CPLA2, EDNRA and HDAC7. Interacts with the cytoplasmic tail of APP and APBB1/FE65. Interacts with TRIM24 and TRIM68. Forms a complex with SENP6 and UBE2I in response to UV irradiation. Identified in a complex with HINT1. Interacts with ATF2 and CUL3. Interacts with NR1D2 (via N-terminus). Component of a SWR1-like complex. Interacts with FOXP3. Interacts with ZBTB49. Interacts with SRF. Interacts with ATF3; promoting autoacetylation and deubiquitination by USP7. Interacts with EP300/p300; interaction promotes KAT5 autoacetylation. Interacts with PRKDC; interaction is impaired following KAT5 sumoylation. Interacts with GPR50. Interacts with NME3; this interaction enables recruitment of NME3 at DNA damage sites where it plays a role in the repair of DNA. (Microbial infection) Interacts with HIV-1 TAT. Phosphorylated on Ser-86 and Ser-90; enhanced during G2/M phase. The phosphorylated form has a higher activity. Phosphorylation at Ser-90 by CDK1 or CDK9 is a prerequisite for phosphorylation at Ser-86 by GSK3. Phosphorylation at Ser-86 by GSK3 (GSK3A or GSK3B) activates acetyltransferase and acyltransferase activities. Phosphorylation at Ser-90 by CDK9 promotes KAT5 recruitment to chromatin. Phosphorylation by VRK1 following DNA damage promotes KAT5 association with chromatin and histone acetyltransferase activity. Post-translationally, autoacetylated. Autoacetylation is required for histone acetyltransferase activity. Autoacetylation at Lys-327 is facilitated by interaction with EP300/p300: it prevents ubiquitination and subsequent degradation by the proteasome and promotes acetylation of target proteins. Deacetylated by HDAC3 and SIRT1. Deacetylation by HDAC3 promotes its ubiquitination and cytoplasmic localization. In terms of processing, sumoylated by UBE2I at Lys-430 and Lys-451, leading to increase of its histone acetyltransferase activity in UV-induced DNA damage response, as well as its translocation to nuclear bodies. Sumoylation with SUMO2 by PIAS4 at Lys-430 promotes repair of DNA double-strand breaks (DSBs) via homologous recombination (HR). Sumoylation by PIAS4 impairs interaction with PRKDC, inhibiting non-homologous end joining (NHEJ)-mediated repair of DSBs, thereby facilitating HR. Desumoylated by SENP3. Ubiquitinated by MDM2, leading to its proteasome-dependent degradation. Ubiquitination is prevented by autoacetylation at Lys-327. Ubiquitinated following deacetylation by HDAC3, leading to cytoplasmic localization. Deubiquitinated by USP7 following interaction with ATF3, promoting its stabilization. Post-translationally, (Microbial infection) In case of HIV-1 infection, interaction with the viral Tat protein leads to KAT5 polyubiquitination and targets it to degradation.

It localises to the nucleus. Its subcellular location is the chromosome. The protein resides in the cytoplasm. The protein localises to the centromere. It is found in the kinetochore. It localises to the cytoskeleton. Its subcellular location is the spindle pole. The protein resides in the nucleolus. The protein localises to the perinuclear region. It carries out the reaction L-lysyl-[histone] + acetyl-CoA = N(6)-acetyl-L-lysyl-[histone] + CoA + H(+). The enzyme catalyses L-lysyl-[protein] + acetyl-CoA = N(6)-acetyl-L-lysyl-[protein] + CoA + H(+). It catalyses the reaction (2E)-butenoyl-CoA + L-lysyl-[protein] = N(6)-(2E)-butenoyl-L-lysyl-[protein] + CoA + H(+). The catalysed reaction is 2-hydroxyisobutanoyl-CoA + L-lysyl-[protein] = N(6)-(2-hydroxyisobutanoyl)-L-lysyl-[protein] + CoA + H(+). It carries out the reaction (S)-lactoyl-CoA + L-lysyl-[protein] = N(6)-[(S)-lactoyl]-L-lysyl-[protein] + CoA + H(+). With respect to regulation, acyltransferase and acetyltransferase activities are activated by phosphorylation and autoacetylation. Autoacetylation activates the histone acetyltransferase activity. Functionally, catalytic subunit of the NuA4 histone acetyltransferase complex, a multiprotein complex involved in transcriptional activation of select genes principally by acetylation of nucleosomal histones H2A and H4. Histone acetylation alters nucleosome-DNA interactions and promotes interaction of the modified histones with other proteins which positively regulate transcription. The NuA4 histone acetyltransferase complex is required for the activation of transcriptional programs associated with proto-oncogene mediated growth induction, tumor suppressor mediated growth arrest and replicative senescence, apoptosis, and DNA repair. The NuA4 complex plays a direct role in repair of DNA double-strand breaks (DSBs) by promoting homologous recombination (HR): the complex inhibits TP53BP1 binding to chromatin via MBTD1, which recognizes and binds histone H4 trimethylated at 'Lys-20' (H4K20me), and KAT5 that catalyzes acetylation of 'Lys-15' of histone H2A (H2AK15ac), thereby blocking the ubiquitination mark required for TP53BP1 localization at DNA breaks. Also involved in DSB repair by mediating acetylation of 'Lys-5' of histone H2AX (H2AXK5ac), promoting NBN/NBS1 assembly at the sites of DNA damage. The NuA4 complex plays a key role in hematopoietic stem cell maintenance and is required to maintain acetylated H2A.Z/H2AZ1 at MYC target genes. The NuA4 complex is also required for spermatid development by promoting acetylation of histones: histone hyperacetylation is required for histone replacement during the transition from round to elongating spermatids. Component of a SWR1-like complex that specifically mediates the removal of histone H2A.Z/H2AZ1 from the nucleosome. Also acetylates non-histone proteins, such as BMAL1, ATM, AURKB, CHKA, CGAS, ERCC4/XPF, LPIN1, TP53/p53, NDC80/HEC1, NR1D2, RAN, SOX4, FOXP3, SQSTM1, ULK1 and RUBCNL/Pacer. Directly acetylates and activates ATM. Promotes nucleotide excision repair (NER) by mediating acetylation of ERCC4/XPF, thereby promoting formation of the ERCC4-ERCC1 complex. Relieves NR1D2-mediated inhibition of APOC3 expression by acetylating NR1D2. Acts as a regulator of regulatory T-cells (Treg) by catalyzing FOXP3 acetylation, thereby promoting FOXP3 transcriptional repressor activity. Involved in skeletal myoblast differentiation by mediating acetylation of SOX4. Catalyzes acetylation of APBB1/FE65, increasing its transcription activator activity. Promotes transcription elongation during the activation phase of the circadian cycle by catalyzing acetylation of BMAL1, promoting elongation of circadian transcripts. Together with GSK3 (GSK3A or GSK3B), acts as a regulator of autophagy: phosphorylated at Ser-86 by GSK3 under starvation conditions, leading to activate acetyltransferase activity and promote acetylation of key autophagy regulators, such as ULK1 and RUBCNL/Pacer. Acts as a regulator of the cGAS-STING innate antiviral response by catalyzing acetylation the N-terminus of CGAS, thereby promoting CGAS DNA-binding and activation. Also regulates lipid metabolism by mediating acetylation of CHKA or LPIN1. Promotes lipolysis of lipid droplets following glucose deprivation by mediating acetylation of isoform 1 of CHKA, thereby promoting monomerization of CHKA and its conversion into a tyrosine-protein kinase. Acts as a regulator of fatty-acid-induced triacylglycerol synthesis by catalyzing acetylation of LPIN1, thereby promoting the synthesis of diacylglycerol. In addition to protein acetyltransferase, can use different acyl-CoA substrates, such as (2E)-butenoyl-CoA (crotonyl-CoA), S-lactoyl-CoA (lactyl-CoA) and 2-hydroxyisobutanoyl-CoA (2-hydroxyisobutyryl-CoA), and is able to mediate protein crotonylation, lactylation and 2-hydroxyisobutyrylation, respectively. Acts as a key regulator of chromosome segregation and kinetochore-microtubule attachment during mitosis by mediating acetylation or crotonylation of target proteins. Catalyzes acetylation of AURKB at kinetochores, increasing AURKB activity and promoting accurate chromosome segregation in mitosis. Acetylates RAN during mitosis, promoting microtubule assembly at mitotic chromosomes. Acetylates NDC80/HEC1 during mitosis, promoting robust kinetochore-microtubule attachment. Catalyzes crotonylation of MAPRE1/EB1, thereby ensuring accurate spindle positioning in mitosis. Catalyzes lactylation of NBN/NBS1 in response to DNA damage, thereby promoting DNA double-strand breaks (DSBs) via homologous recombination (HR). Its function is as follows. (Microbial infection) Catalyzes the acetylation of flavivirus NS3 protein to modulate their RNA-binding and -unwinding activities leading to facilitate viral replication. The chain is Histone acetyltransferase KAT5 from Homo sapiens (Human).